Here is a 196-residue protein sequence, read N- to C-terminus: ATP-dependent Clp protease proteolytic subunit (196 aa).

Catalysis depends on Ser-98, which acts as the Nucleophile. The active site involves His-123.

It belongs to the peptidase S14 family. In terms of assembly, fourteen ClpP subunits assemble into 2 heptameric rings which stack back to back to give a disk-like structure with a central cavity, resembling the structure of eukaryotic proteasomes.

It localises to the cytoplasm. It carries out the reaction Hydrolysis of proteins to small peptides in the presence of ATP and magnesium. alpha-casein is the usual test substrate. In the absence of ATP, only oligopeptides shorter than five residues are hydrolyzed (such as succinyl-Leu-Tyr-|-NHMec, and Leu-Tyr-Leu-|-Tyr-Trp, in which cleavage of the -Tyr-|-Leu- and -Tyr-|-Trp bonds also occurs).. Cleaves peptides in various proteins in a process that requires ATP hydrolysis. Has a chymotrypsin-like activity. Plays a major role in the degradation of misfolded proteins. This chain is ATP-dependent Clp protease proteolytic subunit, found in Limosilactobacillus fermentum (strain NBRC 3956 / LMG 18251) (Lactobacillus fermentum).